The sequence spans 257 residues: Deoxyribose-phosphate aldolase (257 aa).

Asp102 functions as the Proton donor/acceptor in the catalytic mechanism. Lys165 acts as the Schiff-base intermediate with acetaldehyde in catalysis. Lys199 serves as the catalytic Proton donor/acceptor.

Belongs to the DeoC/FbaB aldolase family. DeoC type 2 subfamily.

The protein localises to the cytoplasm. It catalyses the reaction 2-deoxy-D-ribose 5-phosphate = D-glyceraldehyde 3-phosphate + acetaldehyde. The protein operates within carbohydrate degradation; 2-deoxy-D-ribose 1-phosphate degradation; D-glyceraldehyde 3-phosphate and acetaldehyde from 2-deoxy-alpha-D-ribose 1-phosphate: step 2/2. In terms of biological role, catalyzes a reversible aldol reaction between acetaldehyde and D-glyceraldehyde 3-phosphate to generate 2-deoxy-D-ribose 5-phosphate. This chain is Deoxyribose-phosphate aldolase, found in Photobacterium profundum (strain SS9).